The chain runs to 129 residues: Ribosome-binding factor A (129 aa).

It belongs to the RbfA family. As to quaternary structure, monomer. Binds 30S ribosomal subunits, but not 50S ribosomal subunits or 70S ribosomes.

It is found in the cytoplasm. Functionally, one of several proteins that assist in the late maturation steps of the functional core of the 30S ribosomal subunit. Associates with free 30S ribosomal subunits (but not with 30S subunits that are part of 70S ribosomes or polysomes). Required for efficient processing of 16S rRNA. May interact with the 5'-terminal helix region of 16S rRNA. The polypeptide is Ribosome-binding factor A (Desulfosudis oleivorans (strain DSM 6200 / JCM 39069 / Hxd3) (Desulfococcus oleovorans)).